The sequence spans 268 residues: 4-diphosphocytidyl-2-C-methyl-D-erythritol kinase (268 aa).

Lys-10 is a catalytic residue. 101–111 serves as a coordination point for ATP; the sequence is PTQAGLGGGST. Residue Asp-143 is part of the active site.

The protein belongs to the GHMP kinase family. IspE subfamily.

It catalyses the reaction 4-CDP-2-C-methyl-D-erythritol + ATP = 4-CDP-2-C-methyl-D-erythritol 2-phosphate + ADP + H(+). Its pathway is isoprenoid biosynthesis; isopentenyl diphosphate biosynthesis via DXP pathway; isopentenyl diphosphate from 1-deoxy-D-xylulose 5-phosphate: step 3/6. Its function is as follows. Catalyzes the phosphorylation of the position 2 hydroxy group of 4-diphosphocytidyl-2C-methyl-D-erythritol. This Helicobacter acinonychis (strain Sheeba) protein is 4-diphosphocytidyl-2-C-methyl-D-erythritol kinase.